A 183-amino-acid chain; its full sequence is ATP-dependent protease subunit HslV (183 aa).

Residue Thr13 is part of the active site. Na(+) is bound by residues Gly168, Cys171, and Thr174.

Belongs to the peptidase T1B family. HslV subfamily. A double ring-shaped homohexamer of HslV is capped on each side by a ring-shaped HslU homohexamer. The assembly of the HslU/HslV complex is dependent on binding of ATP.

The protein resides in the cytoplasm. It carries out the reaction ATP-dependent cleavage of peptide bonds with broad specificity.. Its activity is regulated as follows. Allosterically activated by HslU binding. In terms of biological role, protease subunit of a proteasome-like degradation complex believed to be a general protein degrading machinery. This Xanthomonas oryzae pv. oryzae (strain MAFF 311018) protein is ATP-dependent protease subunit HslV.